The sequence spans 243 residues: BTB/POZ domain-containing protein At4g08455 (243 aa).

Residues 19–51 (KECYVEAGETEEELKREIDDLKAKVAFLRLSSS) are a coiled coil. A BTB domain is found at 64–136 (TDVVLIASED…LYTAEACLDE (73 aa)).

Interacts with CUL3A and CUL3B.

It participates in protein modification; protein ubiquitination. In terms of biological role, may act as a substrate-specific adapter of an E3 ubiquitin-protein ligase complex (CUL3-RBX1-BTB) which mediates the ubiquitination and subsequent proteasomal degradation of target proteins. This chain is BTB/POZ domain-containing protein At4g08455, found in Arabidopsis thaliana (Mouse-ear cress).